We begin with the raw amino-acid sequence, 476 residues long: Serine/threonine-protein kinase Chk1 (476 aa).

The interaction with CLSPN stretch occupies residues 1-265; the sequence is MAVPFVEDWD…IPDIKKDRWY (265 aa). The region spanning 9 to 265 is the Protein kinase domain; sequence WDLVQTLGEG…IPDIKKDRWY (257 aa). ATP is bound by residues 15 to 23 and Lys38; that span reads LGEGAYGEV. Residue Asp130 is the Proton acceptor of the active site. Lys132 participates in a covalent cross-link: Glycyl lysine isopeptide (Lys-Gly) (interchain with G-Cter in ubiquitin). The tract at residues 267 to 331 is disordered; that stretch reads KPLNRGAKRP…RTGLSLWDTG (65 aa). At Ser280 the chain carries Phosphoserine; by PKB/AKT1. Over residues 280–291 the composition is skewed to low complexity; sequence SGGMSESSSGFS. 3 positions are modified to phosphoserine: Ser286, Ser296, and Ser301. Positions 298-320 are enriched in polar residues; that stretch reads LDFSPVNNGSSEETVKFSSSQPE. Ser317 bears the Phosphoserine; by ATM and ATR mark. Residue Ser345 is modified to Phosphoserine; by ATR. Residues 391-476 form an autoinhibitory region region; that stretch reads QCLKETFEKL…SSQKVWFPVT (86 aa). Residue Lys436 forms a Glycyl lysine isopeptide (Lys-Gly) (interchain with G-Cter in ubiquitin) linkage. 3 positions are modified to phosphoserine: Ser463, Ser467, and Ser468.

It belongs to the protein kinase superfamily. CAMK Ser/Thr protein kinase family. NIM1 subfamily. Interacts (phosphorylated by ATR) with RAD51. Interacts with and phosphorylates CLSPN, an adapter protein that regulates the ATR-dependent phosphorylation of CHEK1. Interacts with BRCA1. Interacts with and phosphorylates CDC25A, CDC25B and CDC25C. Interacts with FBXO6, which regulates CHEK1. Interacts with PPM1D, which regulates CHEK1 through dephosphorylation. Interacts with TIMELESS; DNA damage-dependent. Interacts with FEM1B; activates CHEK1 in response to stress. Interacts with TLK1. Interacts with XPO1 and YWHAZ. Interacts with CDK5RAP3; antagonizes CHEK1. Post-translationally, phosphorylated by ATR in a RAD17-dependent manner in response to ultraviolet irradiation and inhibition of DNA replication. Phosphorylated by ATM in response to ionizing irradiation. ATM and ATR can both phosphorylate Ser-317 and Ser-345 and this results in enhanced kinase activity. Phosphorylation at Ser-345 induces a change in the conformation of the protein, activates the kinase activity and is a prerequisite for interaction with FBXO6 and subsequent ubiquitination at Lys-436. Phosphorylation at Ser-345 also increases binding to 14-3-3 proteins and promotes nuclear retention. Conversely, dephosphorylation at Ser-345 by PPM1D may contribute to exit from checkpoint mediated cell cycle arrest. Phosphorylation at Ser-280 by AKT1/PKB, may promote mono and/or diubiquitination. Also phosphorylated at undefined residues during mitotic arrest, resulting in decreased activity. In terms of processing, ubiquitinated. Mono or diubiquitination promotes nuclear exclusion. The activated form (phosphorylated on Ser-345) is polyubiquitinated at Lys-436 by some SCF-type E3 ubiquitin ligase complex containing FBXO6 promoting its degradation. Ubiquitination and degradation are required to terminate the checkpoint and ensure that activated CHEK1 does not accumulate as cells progress through S phase, when replication forks encounter transient impediments during normal DNA replication. 'Lys-63'-mediated ubiquitination by TRAF4 at Lys-132 activates cell cycle arrest and activation of DNA repair. Proteolytically cleaved at the C-terminus by SPRTN during normal DNA replication, thereby promoting CHEK1 removal from chromatin and activating the protein kinase activity. Found in all adult tissues tested. Elevated expression in testis, lung and spleen. 15.5 day old embryos show ubiquitous expression with strong expression in brain, liver, kidney, pancreas, intestine, thymus and lung.

Its subcellular location is the nucleus. The protein localises to the chromosome. It is found in the cytoplasm. The protein resides in the cytoskeleton. It localises to the microtubule organizing center. Its subcellular location is the centrosome. The enzyme catalyses L-seryl-[protein] + ATP = O-phospho-L-seryl-[protein] + ADP + H(+). The catalysed reaction is L-threonyl-[protein] + ATP = O-phospho-L-threonyl-[protein] + ADP + H(+). Its activity is regulated as follows. Activated through phosphorylation predominantly by ATR but also by ATM in response to DNA damage or inhibition of DNA replication. Activation is modulated by several mediators including CLSPN, BRCA1 and FEM1B. Proteolytic cleavage at the C-terminus by SPRTN during normal DNA replication activates the protein kinase activity. In terms of biological role, serine/threonine-protein kinase which is required for checkpoint-mediated cell cycle arrest and activation of DNA repair in response to the presence of DNA damage or unreplicated DNA. May also negatively regulate cell cycle progression during unperturbed cell cycles. This regulation is achieved by a number of mechanisms that together help to preserve the integrity of the genome. Recognizes the substrate consensus sequence [R-X-X-S/T]. Binds to and phosphorylates CDC25A, CDC25B and CDC25C. Phosphorylation of CDC25A at 'Ser-178' and 'Thr-507' and phosphorylation of CDC25C at 'Ser-216' creates binding sites for 14-3-3 proteins which inhibit CDC25A and CDC25C. Phosphorylation of CDC25A at 'Ser-76', 'Ser-124', 'Ser-178', 'Ser-279' and 'Ser-293' promotes proteolysis of CDC25A. Phosphorylation of CDC25A at 'Ser-76' primes the protein for subsequent phosphorylation at 'Ser-79', 'Ser-82' and 'Ser-88' by NEK11, which is required for polyubiquitination and degradation of CDCD25A. Inhibition of CDC25 leads to increased inhibitory tyrosine phosphorylation of CDK-cyclin complexes and blocks cell cycle progression. Also phosphorylates NEK6. Binds to and phosphorylates RAD51 at 'Thr-309', which promotes the release of RAD51 from BRCA2 and enhances the association of RAD51 with chromatin, thereby promoting DNA repair by homologous recombination. Phosphorylates multiple sites within the C-terminus of TP53, which promotes activation of TP53 by acetylation and promotes cell cycle arrest and suppression of cellular proliferation. Also promotes repair of DNA cross-links through phosphorylation of FANCE. Binds to and phosphorylates TLK1 at 'Ser-743', which prevents the TLK1-dependent phosphorylation of the chromatin assembly factor ASF1A. This may enhance chromatin assembly both in the presence or absence of DNA damage. May also play a role in replication fork maintenance through regulation of PCNA. May regulate the transcription of genes that regulate cell-cycle progression through the phosphorylation of histones. Phosphorylates histone H3.1 (to form H3T11ph), which leads to epigenetic inhibition of a subset of genes. May also phosphorylate RB1 to promote its interaction with the E2F family of transcription factors and subsequent cell cycle arrest. Phosphorylates SPRTN, promoting SPRTN recruitment to chromatin. Reduces replication stress and activates the G2/M checkpoint, by phosphorylating and inactivating PABIR1/FAM122A and promoting the serine/threonine-protein phosphatase 2A-mediated dephosphorylation and stabilization of WEE1 levels and activity. In Mus musculus (Mouse), this protein is Serine/threonine-protein kinase Chk1 (Chek1).